Consider the following 472-residue polypeptide: Cysteine--tRNA ligase (472 aa).

Cys28 contributes to the Zn(2+) binding site. Residues 30-40 (PTVYNYIHIGN) carry the 'HIGH' region motif. Zn(2+)-binding residues include Cys212, His237, and Glu241. The 'KMSKS' region motif lies at 271-275 (KMSKS). Lys274 lines the ATP pocket.

It belongs to the class-I aminoacyl-tRNA synthetase family. Monomer. Zn(2+) serves as cofactor.

It localises to the cytoplasm. The catalysed reaction is tRNA(Cys) + L-cysteine + ATP = L-cysteinyl-tRNA(Cys) + AMP + diphosphate. The protein is Cysteine--tRNA ligase of Limosilactobacillus fermentum (strain NBRC 3956 / LMG 18251) (Lactobacillus fermentum).